The primary structure comprises 380 residues: Chaperone protein DnaJ (380 aa).

The 66-residue stretch at 5–70 folds into the J domain; sequence DYYEILGVAK…QKRAAYDQYG (66 aa). A CR-type zinc finger spans residues 135–213; that stretch reads GVSKEIRIPT…CHGHGRVEKS (79 aa). Cys-148, Cys-151, Cys-165, Cys-168, Cys-187, Cys-190, Cys-201, and Cys-204 together coordinate Zn(2+). 4 CXXCXGXG motif repeats span residues 148–155, 165–172, 187–194, and 201–208; these read CGVCHGSG, CSTCHGAG, CPTCHGRG, and CNACHGHG.

It belongs to the DnaJ family. Homodimer. Zn(2+) serves as cofactor.

Its subcellular location is the cytoplasm. Participates actively in the response to hyperosmotic and heat shock by preventing the aggregation of stress-denatured proteins and by disaggregating proteins, also in an autonomous, DnaK-independent fashion. Unfolded proteins bind initially to DnaJ; upon interaction with the DnaJ-bound protein, DnaK hydrolyzes its bound ATP, resulting in the formation of a stable complex. GrpE releases ADP from DnaK; ATP binding to DnaK triggers the release of the substrate protein, thus completing the reaction cycle. Several rounds of ATP-dependent interactions between DnaJ, DnaK and GrpE are required for fully efficient folding. Also involved, together with DnaK and GrpE, in the DNA replication of plasmids through activation of initiation proteins. The polypeptide is Chaperone protein DnaJ (Erwinia tasmaniensis (strain DSM 17950 / CFBP 7177 / CIP 109463 / NCPPB 4357 / Et1/99)).